The primary structure comprises 312 residues: Expansin-A24 (312 aa).

The N-terminal stretch at 1 to 27 (MELLKRKLYAKILMMVMVIWIAPMTNG) is a signal peptide. The segment at 31–86 (ASHVPGGRPGAHPSHGAHPAHGAHPSHGAHPSHGAHPSHGAHPSHGALPSHGGQVP) is disordered. The segment covering 40–77 (GAHPSHGAHPAHGAHPSHGAHPSHGAHPSHGAHPSHGA) has biased composition (low complexity). 6 consecutive repeat copies span residues 42–47 (HPSHGA), 48–53 (HPAHGA), 54–59 (HPSHGA), 60–65 (HPSHGA), 66–71 (HPSHGA), and 72–77 (HPSHGA). A 6 X 6 AA tandem repeats of H-P-S-H-G-A region spans residues 42–77 (HPSHGAHPAHGAHPSHGAHPSHGAHPSHGAHPSHGA). The 111-residue stretch at 108-218 (QGACGYGDLH…RRVPCAKIGG (111 aa)) folds into the Expansin-like EG45 domain. In terms of domain architecture, Expansin-like CBD spans 228-307 (HFLMILPYNV…DWKCNGQSFD (80 aa)).

Belongs to the expansin family. Expansin A subfamily.

It is found in the secreted. The protein resides in the cell wall. The protein localises to the membrane. Its function is as follows. Causes loosening and extension of plant cell walls by disrupting non-covalent bonding between cellulose microfibrils and matrix glucans. No enzymatic activity has been found. The chain is Expansin-A24 (EXPA24) from Arabidopsis thaliana (Mouse-ear cress).